The following is a 56-amino-acid chain: Small ribosomal subunit protein uS14 (56 aa).

Residues cysteine 21, cysteine 24, cysteine 39, and cysteine 42 each coordinate Zn(2+).

Belongs to the universal ribosomal protein uS14 family. As to quaternary structure, component of the 40S small ribosomal subunit. Zn(2+) is required as a cofactor.

Its subcellular location is the cytoplasm. The protein localises to the cytosol. It is found in the rough endoplasmic reticulum. The sequence is that of Small ribosomal subunit protein uS14 (RpS29) from Lonomia obliqua (Moth).